The chain runs to 1133 residues: Lysylphosphatidylglycerol biosynthesis bifunctional protein LysX (1133 aa).

The segment at 1 to 626 (MTTVDASPGI…LLHHDGSTPD (626 aa)) is phosphatidylglycerol lysyltransferase. The next 7 membrane-spanning stretches (helical) occupy residues 43–63 (VPAA…IASV), 82–102 (LFNF…LAAA), 109–129 (IAWL…AVDM), 140–160 (FGEN…VLSY), 177–197 (AVLV…VELF), 233–253 (LNAI…IVLF), and 575–595 (LIPR…LPFS). The lysine--tRNA ligase stretch occupies residues 627–1133 (VSGLQTADVD…TLPFPLAKPH (507 aa)). Positions 1045 and 1052 each coordinate Mg(2+).

The protein in the N-terminal section; belongs to the LPG synthetase family. It in the C-terminal section; belongs to the class-II aminoacyl-tRNA synthetase family. The cofactor is Mg(2+).

It localises to the cell membrane. It carries out the reaction tRNA(Lys) + L-lysine + ATP = L-lysyl-tRNA(Lys) + AMP + diphosphate. It catalyses the reaction L-lysyl-tRNA(Lys) + a 1,2-diacyl-sn-glycero-3-phospho-(1'-sn-glycerol) = a 1,2-diacyl-sn-glycero-3-phospho-1'-(3'-O-L-lysyl)-sn-glycerol + tRNA(Lys). Functionally, catalyzes the production of L-lysyl-tRNA(Lys)transfer and the transfer of a lysyl group from L-lysyl-tRNA(Lys) to membrane-bound phosphatidylglycerol (PG), which produces lysylphosphatidylglycerol (LPG), one of the components of the bacterial membrane with a positive net charge. LPG synthesis contributes to the resistance to cationic antimicrobial peptides (CAMPs) and likely protects M.tuberculosis against the CAMPs produced by competiting microorganisms (bacteriocins). In fact, the modification of anionic phosphatidylglycerol with positively charged L-lysine results in repulsion of the peptides. The polypeptide is Lysylphosphatidylglycerol biosynthesis bifunctional protein LysX (lysX) (Mycobacterium leprae (strain Br4923)).